The primary structure comprises 609 residues: Thiamine metabolism regulatory protein THI3 (609 aa).

A disordered region spans residues 578–598 (SKQVQEENENSSAVNTPTPEF).

This sequence belongs to the TPP enzyme family. It depends on Mg(2+) as a cofactor. Requires thiamine diphosphate as cofactor.

Its subcellular location is the nucleus. The enzyme catalyses 4-methyl-2-oxopentanoate + H(+) = 3-methylbutanal + CO2. It catalyses the reaction (S)-3-methyl-2-oxopentanoate + H(+) = 2-methylbutanal + CO2. Its pathway is amino-acid degradation; Ehrlich pathway. Functionally, one of five 2-oxo acid decarboxylases (PDC1, PDC5, PDC6, ARO10, and THI3) involved in amino acid catabolism. The enzyme catalyzes the decarboxylation of amino acids, which, in a first step, have been transaminated to the corresponding 2-oxo acids (alpha-keto-acids). In a third step, the resulting aldehydes are reduced to alcohols, collectively referred to as fusel oils or alcohols. Its preferred substrates are the transaminated amino acids derived from leucine (4-methyl-2-oxopentanoate, also alpha-keto-isocaproate) and isoleucine ((3S)-3-methyl-2-oxopentanoate, also alpha-keto-beta-methylvalerate), whereas transaminated valine, transaminated aromatic amino acids, and pyruvate are no substrates. In analogy to the pyruvate decarboxylases the enzyme may in a side-reaction catalyze condensation (or carboligation) reactions leading to the formation of 2-hydroxy ketone, collectively called acyloins. The enzyme is also positively regulating the thiamine metabolism by a molecular mechanism that may involve thiamine concentration sensing and signal transmission. The polypeptide is Thiamine metabolism regulatory protein THI3 (THI3) (Saccharomyces cerevisiae (strain ATCC 204508 / S288c) (Baker's yeast)).